The primary structure comprises 54 residues: Relaxin (54 aa).

Glutamine 1 is subject to Pyrrolidone carboxylic acid. Cystine bridges form between cysteine 10–cysteine 41, cysteine 22–cysteine 54, and cysteine 40–cysteine 45.

This sequence belongs to the insulin family. In terms of assembly, heterodimer of a B chain and an A chain linked by two disulfide bonds.

Its subcellular location is the secreted. Relaxin is an ovarian hormone that acts with estrogen to produce dilatation of the birth canal in many mammals. This chain is Relaxin, found in Balaenoptera edeni (Pigmy Bryde's whale).